A 198-amino-acid polypeptide reads, in one-letter code: Hookworm platelet inhibitor 1 (198 aa).

The first 17 residues, 1-17, serve as a signal peptide directing secretion; it reads MSSYLLVLVAILGFAYA. 5 disulfide bridges follow: Cys-24–Cys-65, Cys-78–Cys-146, Cys-141–Cys-154, Cys-174–Cys-186, and Cys-177–Cys-195.

Belongs to the CRISP family. In terms of assembly, monomer. In terms of tissue distribution, detected in cephalic glands.

The protein resides in the secreted. Functionally, hookworms inhibitor of platelet aggregation and adhesion. Native protein inhibits platelet aggregation induced by ADP, epinephrine, and thrombin. In addition, it prevents adhesion of resting platelets to immobilized fibrinogen and collagen. May act by binding to glycoprotein IIb/IIIa (ITGA2B/ITGB3) and integrin alpha-2/beta-1 (ITGA1/ITGB1), respectively. It is noteworthy that the recombinant protein fails to inhibit binding to fibrinogen (through ITGA2B/ITGB3) and collagen (through ITGA1/ITGB1). The polypeptide is Hookworm platelet inhibitor 1 (Ancylostoma caninum (Dog hookworm)).